The sequence spans 199 residues: Zinc finger matrin-type protein 2 (199 aa).

A2 is modified (N-acetylalanine). Residues K8, K36, K39, K45, K55, K61, K64, K70, K102, and K123 each participate in a glycyl lysine isopeptide (Lys-Gly) (interchain with G-Cter in SUMO2) cross-link. The segment at 27–46 (KRLTEEREKKDGKPVQPVKR) is disordered. Residues 80–104 (YYCNVCDCVVKDSINFLDHINGKKH) form a Matrin-type zinc finger. Positions 150 to 173 (REEEEKAKAYKKEKQKEKKRRAEE) are enriched in basic and acidic residues. The segment at 150–175 (REEEEKAKAYKKEKQKEKKRRAEEDL) is disordered.

Component of the spliceosome B complex.

The protein resides in the nucleus. Functionally, involved in pre-mRNA splicing as a component of the spliceosome. In Homo sapiens (Human), this protein is Zinc finger matrin-type protein 2 (ZMAT2).